The following is a 617-amino-acid chain: ATP-dependent RNA helicase DBP1 (617 aa).

The interval 1 to 90 is disordered; that stretch reads MADLPQKVSN…TSANYNRGGS (90 aa). A compositionally biased stretch (polar residues) spans 7–17; it reads KVSNLSINNKE. Residues 38-58 show a composition bias toward basic and acidic residues; the sequence is PSFERSTPKQEDKVTGGDFFR. Polar residues predominate over residues 79-90; the sequence is GGTSANYNRGGS. A Q motif motif is present at residues 154-182; that stretch reads LDFSSPPLDELLMENIKLASFTKPTPVQK. Residues 185–374 enclose the Helicase ATP-binding domain; sequence IPIVTKGRDL…RDFLDNYIFL (190 aa). An ATP-binding site is contributed by 198-205; it reads AQTGSGKT. Residues 318 to 321 carry the DEAD box motif; that stretch reads DEAD. A Helicase C-terminal domain is found at 385-545; that stretch reads NITQRILYVD…EVPTFLSDLS (161 aa). Residues 542 to 617 are disordered; sequence SDLSRQNSRG…GYGNSNASWW (76 aa). Residues 580–594 show a composition bias toward polar residues; it reads FGSTRPRNTGTSNWG.

This sequence belongs to the DEAD box helicase family. DDX3/DED1 subfamily.

It is found in the cytoplasm. The enzyme catalyses ATP + H2O = ADP + phosphate + H(+). Its function is as follows. ATP-binding RNA helicase involved in translation initiation. Remodels RNA in response to ADP and ATP concentrations by facilitating disruption, but also formation of RNA duplexes. Redundant to DED1, may be required in conditions in which DED1 expression is decreased. In Saccharomyces cerevisiae (strain ATCC 204508 / S288c) (Baker's yeast), this protein is ATP-dependent RNA helicase DBP1 (DBP1).